Reading from the N-terminus, the 1423-residue chain is Protein phosphatase Slingshot homolog 2 (1423 aa).

The segment at 1–37 (MALVTVQRSPTPSTTSSPCASEADSGEEECRSQPRSI) is disordered. Residues 9-18 (SPTPSTTSSP) show a composition bias toward low complexity. Phosphoserine is present on residues serine 17, serine 25, and serine 36. The 56-residue stretch at 248–303 (ERTERLIKTKLREIMMQKDLENITSKEIRTELEMQMVCNLREFKEFIDNEMIVILG) folds into the DEK-C domain. Residues 307–448 (SPTQIFEHVF…LEEYQGILLA (142 aa)) enclose the Tyrosine-protein phosphatase domain. Catalysis depends on cysteine 392, which acts as the Phosphocysteine intermediate. Phosphoserine is present on residues serine 461, serine 487, serine 534, serine 631, and serine 633. Disordered stretches follow at residues 617–641 (TSPL…CQTE), 664–684 (QETR…GGRN), 696–728 (PSKV…QSKA), 797–825 (ENKP…MCNP), 840–862 (EGEP…AKWY), 877–954 (LRQE…NATV), 962–981 (FDHL…TQQE), 1019–1041 (TSPN…EQGL), 1070–1108 (SLHP…SSLS), and 1144–1179 (TEQS…YKDS). Over residues 621 to 635 (KDPPMSPDPESPSPQ) the composition is skewed to pro residues. Over residues 664 to 680 (QETRSRSFSHSRMEELG) the composition is skewed to basic and acidic residues. Positions 889-904 (TCTSLSTRKNSKNDSS) are enriched in polar residues. Positions 910-932 (PKGKSDEAPPEHSFVLKEPEMSK) are enriched in basic and acidic residues. Over residues 941–953 (EAGSLSHSEQNAT) the composition is skewed to polar residues. A compositionally biased stretch (polar residues) spans 1019-1034 (TSPNHTGPGSEIATSE). The span at 1144 to 1172 (TEQSSTTDEPSAEQVSWEESQESPLSSGS) shows a compositional bias: polar residues. Serine 1217 carries the phosphoserine modification. The residue at position 1422 (threonine 1422) is a Phosphothreonine.

This sequence belongs to the protein-tyrosine phosphatase family. In terms of assembly, interacts with filamentous actin.

It is found in the cytoplasm. Its subcellular location is the cytoskeleton. The protein localises to the cell junction. It localises to the focal adhesion. The protein resides in the cytoplasmic vesicle. It is found in the secretory vesicle. Its subcellular location is the acrosome. The enzyme catalyses O-phospho-L-tyrosyl-[protein] + H2O = L-tyrosyl-[protein] + phosphate. The catalysed reaction is O-phospho-L-seryl-[protein] + H2O = L-seryl-[protein] + phosphate. It carries out the reaction O-phospho-L-threonyl-[protein] + H2O = L-threonyl-[protein] + phosphate. Protein phosphatase which regulates actin filament dynamics. Dephosphorylates and activates the actin binding/depolymerizing factor cofilin, which subsequently binds to actin filaments and stimulates their disassembly. Inhibitory phosphorylation of cofilin is mediated by LIMK1, which may also be dephosphorylated and inactivated by this protein. Required for spermatogenesis. Involved in acrosome biogenesis, probably by regulating cofilin-mediated actin cytoskeleton remodeling during proacrosomal vesicle fusion and/or Golgi to perinuclear vesicle trafficking. This Homo sapiens (Human) protein is Protein phosphatase Slingshot homolog 2 (SSH2).